The primary structure comprises 202 residues: Superoxide dismutase [Mn/Fe] (202 aa).

Fe(3+)-binding residues include His-27, His-81, Asp-163, and His-167. Residues His-27, His-81, Asp-163, and His-167 each coordinate Mn(2+).

It belongs to the iron/manganese superoxide dismutase family. Mn(2+) is required as a cofactor. Fe(3+) serves as cofactor.

The enzyme catalyses 2 superoxide + 2 H(+) = H2O2 + O2. In terms of biological role, destroys superoxide anion radicals which are normally produced within the cells and which are toxic to biological systems. Catalyzes the dismutation of superoxide anion radicals into O2 and H2O2 by successive reduction and oxidation of the transition metal ion at the active site. This is Superoxide dismutase [Mn/Fe] (sodA) from Streptococcus agalactiae serotype V (strain ATCC BAA-611 / 2603 V/R).